A 99-amino-acid chain; its full sequence is Ferredoxin, heterocyst (99 aa).

One can recognise a 2Fe-2S ferredoxin-type domain in the interval 4-96 (YQVRLINKKQ…NCTIKTHQEP (93 aa)). Positions 42, 47, 50, and 80 each coordinate [2Fe-2S] cluster.

This sequence belongs to the 2Fe2S plant-type ferredoxin family. The cofactor is [2Fe-2S] cluster.

Functionally, ferredoxins are iron-sulfur proteins that transfer electrons in a wide variety of metabolic reactions. Donates electrons to the nitrogenase. In Nostoc sp. (strain PCC 7120 / SAG 25.82 / UTEX 2576), this protein is Ferredoxin, heterocyst (fdxH).